The following is a 217-amino-acid chain: MNQSLLAPFGTAIERVEAGLNALRQGQGVLVVDDEDRENEGDLIFAAETLTNAQMAMLIRECSGIVCLCLPDEKVKALELPAMVEHNSSQYGTAFTVSIEATVGVTTGVSAADRVTTIKAAIADNAKPSDLARPGHVYPLRAQPGGVLTRRGHTEGTIDLVQLAGLKPAGVLCEVTNPDGTMARLPEIIAFGALHNMPVLTIEDIVVYRKSLLAKVG.

D-ribulose 5-phosphate-binding positions include 37-38, D42, 150-154, and E174; these read RE and RRGHT. E38 is a binding site for Mg(2+). H153 is a Mg(2+) binding site.

This sequence belongs to the DHBP synthase family. In terms of assembly, homodimer. Requires Mg(2+) as cofactor. Mn(2+) serves as cofactor.

The enzyme catalyses D-ribulose 5-phosphate = (2S)-2-hydroxy-3-oxobutyl phosphate + formate + H(+). The protein operates within cofactor biosynthesis; riboflavin biosynthesis; 2-hydroxy-3-oxobutyl phosphate from D-ribulose 5-phosphate: step 1/1. Functionally, catalyzes the conversion of D-ribulose 5-phosphate to formate and 3,4-dihydroxy-2-butanone 4-phosphate. The polypeptide is 3,4-dihydroxy-2-butanone 4-phosphate synthase (Shewanella baltica (strain OS223)).